We begin with the raw amino-acid sequence, 172 residues long: ATP synthase subunit b (172 aa).

The chain crosses the membrane as a helical span at residues 17-37 (IVFSAIVLAIVLPFFWWFVIP).

Belongs to the ATPase B chain family. In terms of assembly, F-type ATPases have 2 components, F(1) - the catalytic core - and F(0) - the membrane proton channel. F(1) has five subunits: alpha(3), beta(3), gamma(1), delta(1), epsilon(1). F(0) has three main subunits: a(1), b(2) and c(10-14). The alpha and beta chains form an alternating ring which encloses part of the gamma chain. F(1) is attached to F(0) by a central stalk formed by the gamma and epsilon chains, while a peripheral stalk is formed by the delta and b chains.

It is found in the cell membrane. Its function is as follows. F(1)F(0) ATP synthase produces ATP from ADP in the presence of a proton or sodium gradient. F-type ATPases consist of two structural domains, F(1) containing the extramembraneous catalytic core and F(0) containing the membrane proton channel, linked together by a central stalk and a peripheral stalk. During catalysis, ATP synthesis in the catalytic domain of F(1) is coupled via a rotary mechanism of the central stalk subunits to proton translocation. Functionally, component of the F(0) channel, it forms part of the peripheral stalk, linking F(1) to F(0). The polypeptide is ATP synthase subunit b (Tropheryma whipplei (strain TW08/27) (Whipple's bacillus)).